A 488-amino-acid chain; its full sequence is Neisserial heparin binding antigen (488 aa).

The first 17 residues, 1–17 (MFKRSVIAMACIFALSA), serve as a signal peptide directing secretion. Cysteine 18 carries the N-palmitoyl cysteine lipid modification. Cysteine 18 is lipidated: S-diacylglycerol cysteine. A disordered region spans residues 21-201 (GGGGSPDVKS…NPAPANGGSN (181 aa)). A compositionally biased stretch (basic and acidic residues) spans 43-53 (SEKETEAKEDA). Positions 54–70 (PQAGSQGQGAPSAQGSQ) are enriched in low complexity. Composition is skewed to polar residues over residues 101–118 (DMPQNAAGTDSSTPNHTP) and 127–142 (MENQATDAGESSQPAN). The segment covering 160-183 (AGGQNAGNTAAQGANQAGNNQAAG) has biased composition (low complexity). The short motif at 296 to 306 (RFRRSARSRRS) is the Arg-rich motif element. The tract at residues 306-488 (SLPAEMPLIP…GVFAGKKEQD (183 aa)) is C1 fragment.

The protein belongs to the NHBA family. The C-terminal beta-barrel forms a monomer. In terms of processing, cleaved in vivo by the Neisserial phase-variable autotransporter/serine protease NalP to give 2 fragments. The N-terminus remains in the cell outer membrane while the 22 kDa C-terminus (beginning on Ser-293) is soluble; this soluble fragment is called C2. Cleaved in vitro by human lactoferrin (LTF, between Arg-305 and Ser-306), this fragment is called C1. Cleavage by NalP or lactoferrin does not alter killing of Neisseria by bactericidal antibodies in vitro. Recombinant and cell surface protein is cleaved by human saliva kallikrein (KLK1) between Ser-303 and Arg-304; in saliva kallikrein is more active on NHBA than lactoferrin. Human plasma kallikrein (KLKB1) cleaves in a similar manner to KLK1.

The protein localises to the cell outer membrane. It localises to the cell surface. Its subcellular location is the host mitochondrion. Functionally, a major human immunogenic protein detected in patients recovering from meningitidis, where it induces bactericidal antibodies. Binds heparin and heparan sulfate proteoglycan in vitro via the Arg-rich motif. Heparin-binding to this protein protects bacteria against killing by bactericidal antibodies (serum killing). Binds to human cells via the Arg-rich region; binding may require the intact protein as protein fragments do not bind to human cells. Protein binding to human cells is abolished by treatment with heparinase III but not chondroitinase ABC. The bacteria binds a number of human extracellular sialyated and/or sulfated glycans via this protein, including chondroitin sulfate (KD=5.2 nM), heparin (KD=52 nM) and ganglioside GT3 (KD=210 nM). The recombinant protein binds DNA non-specifically. Its function is as follows. Plays a role in extracellular-DNA (eDNA) mediated biofilm formation. In strain MC58 eDNA stimulates biofilm formation. When NHBA is not processed by NalP there is an increase in positively charged, NHBA- and IgA-derived DNA-binding peptides on the cell surface, resulting in increased DNA-binding peptides and increased biofilm formation. In terms of biological role, [C2 fragment] Localizes to host mitochondria when applied to the apical side of human endothelial cell layers, where it induces production of reactive oxygen species which lead to increased permeability of host endothelial cells. The C1 fragment (which lacks the first 14 residues of C2) does not have this effect. It is not known if this occurs during Neisseria infections. The protein is Neisserial heparin binding antigen of Neisseria meningitidis serogroup B (strain ATCC BAA-335 / MC58).